A 336-amino-acid chain; its full sequence is 3-isopropylmalate dehydrogenase (336 aa).

Residues Arg87, Arg97, Arg121, and Asp211 each contribute to the substrate site. Residues Asp211, Asp235, and Asp239 each contribute to the Mg(2+) site. 271–283 (GSAPDIAGQGIAD) contributes to the NAD(+) binding site.

The protein belongs to the isocitrate and isopropylmalate dehydrogenases family. LeuB type 2 subfamily. As to quaternary structure, homodimer. The cofactor is Mg(2+). It depends on Mn(2+) as a cofactor.

It localises to the cytoplasm. The catalysed reaction is (2R,3S)-3-isopropylmalate + NAD(+) = 4-methyl-2-oxopentanoate + CO2 + NADH. It participates in amino-acid biosynthesis; L-leucine biosynthesis; L-leucine from 3-methyl-2-oxobutanoate: step 3/4. Its function is as follows. Catalyzes the oxidation of 3-carboxy-2-hydroxy-4-methylpentanoate (3-isopropylmalate) to 3-carboxy-4-methyl-2-oxopentanoate. The product decarboxylates to 4-methyl-2 oxopentanoate. The polypeptide is 3-isopropylmalate dehydrogenase (leuB) (Mycobacterium tuberculosis (strain CDC 1551 / Oshkosh)).